The primary structure comprises 232 residues: Thrombin-like enzyme BjussuSP-1 (232 aa).

The region spanning 1–223 is the Peptidase S1 domain; the sequence is VLGGDECDIN…YTDWIQRNIA (223 aa). Disulfide bonds link C7-C138, C25-C41, C73-C230, C117-C184, C149-C163, and C174-C199. The active-site Charge relay system is the H40. N77 carries an N-linked (GlcNAc...) asparagine glycan. D85 serves as the catalytic Charge relay system. N-linked (GlcNAc...) asparagine glycosylation occurs at N129. S178 acts as the Charge relay system in catalysis.

Belongs to the peptidase S1 family. Snake venom subfamily. As to quaternary structure, monomer. N-glycosylated. Contains sialic acid residues. Deglycosylation reduces in 50% the formation of fibrin clot. As to expression, expressed by the venom gland.

Its subcellular location is the secreted. Its activity is regulated as follows. Inhibited by leupeptin, heparin, and 1.10-phenantroline. Functionally, thrombin-like enzyme that shows clotting activity upon human plasma. Shows specific fibrinogenolytic activity for Aalpha chain (FGA). Hydrolyzes fibrin, BAPNA and TAME, as well as chromogenic artificial substrates of the blood coagulation cascasde: S-27654 for factor X (F10), S-2302 for kallikrein (KLK), factor XIa (F11), and XIIa (F12), and S-2266 for kallikrein and factor XIa (F11). Subcutaneous injection into mice induces a mild edema. Intravenous and intramuscular injection reduce plasma fibrinogen concentration and increase the levels of fibrin(ogen) degradation products. Intramuscular injection also promotes an increase in the expression of proMMP-9, but is unable to activate it. The chain is Thrombin-like enzyme BjussuSP-1 from Bothrops jararacussu (Jararacussu).